The primary structure comprises 480 residues: Serine carboxypeptidase-like 35 (480 aa).

A signal peptide spans 1 to 20 (MKKNALWLLCILVLPAIACG). 2 N-linked (GlcNAc...) asparagine glycosylation sites follow: N79 and N146. 3 disulfide bridges follow: C95-C363, C257-C270, and C294-C331. The active site involves S188. N265 carries an N-linked (GlcNAc...) asparagine glycan. A glycan (N-linked (GlcNAc...) asparagine) is linked at N352. Active-site residues include D399 and H452.

Belongs to the peptidase S10 family. As to expression, expressed in seedlings, flowers and siliques.

Its subcellular location is the secreted. Its function is as follows. Probable carboxypeptidase. The polypeptide is Serine carboxypeptidase-like 35 (SCPL35) (Arabidopsis thaliana (Mouse-ear cress)).